The sequence spans 70 residues: Large ribosomal subunit protein bL31 (70 aa).

The Zn(2+) site is built by Cys16, Cys18, Cys37, and Cys40.

It belongs to the bacterial ribosomal protein bL31 family. Type A subfamily. Part of the 50S ribosomal subunit. The cofactor is Zn(2+).

Binds the 23S rRNA. The sequence is that of Large ribosomal subunit protein bL31 from Saccharophagus degradans (strain 2-40 / ATCC 43961 / DSM 17024).